The primary structure comprises 630 residues: Biosynthetic arginine decarboxylase (630 aa).

An N6-(pyridoxal phosphate)lysine modification is found at Lys99. Substrate is bound at residue 281–291 (VDIGGGLGVDY).

It belongs to the Orn/Lys/Arg decarboxylase class-II family. SpeA subfamily. It depends on Mg(2+) as a cofactor. The cofactor is pyridoxal 5'-phosphate.

It catalyses the reaction L-arginine + H(+) = agmatine + CO2. The protein operates within amine and polyamine biosynthesis; agmatine biosynthesis; agmatine from L-arginine: step 1/1. Functionally, catalyzes the biosynthesis of agmatine from arginine. This Phocaeicola vulgatus (strain ATCC 8482 / DSM 1447 / JCM 5826 / CCUG 4940 / NBRC 14291 / NCTC 11154) (Bacteroides vulgatus) protein is Biosynthetic arginine decarboxylase.